A 396-amino-acid polypeptide reads, in one-letter code: S-adenosylmethionine synthase (396 aa).

Position 16 (His16) interacts with ATP. Asp18 is a Mg(2+) binding site. Residue Glu44 coordinates K(+). L-methionine-binding residues include Glu57 and Gln100. Residues 100–110 are flexible loop; that stretch reads QSPDINQGVDR. ATP is bound by residues 165–167, 231–232, Asp240, 246–247, Ala263, and Lys267; these read DAK, KF, and RK. Residue Asp240 participates in L-methionine binding. Lys271 provides a ligand contact to L-methionine.

It belongs to the AdoMet synthase family. In terms of assembly, homotetramer; dimer of dimers. Requires Mg(2+) as cofactor. K(+) serves as cofactor.

The protein localises to the cytoplasm. The enzyme catalyses L-methionine + ATP + H2O = S-adenosyl-L-methionine + phosphate + diphosphate. Its pathway is amino-acid biosynthesis; S-adenosyl-L-methionine biosynthesis; S-adenosyl-L-methionine from L-methionine: step 1/1. Its function is as follows. Catalyzes the formation of S-adenosylmethionine (AdoMet) from methionine and ATP. The overall synthetic reaction is composed of two sequential steps, AdoMet formation and the subsequent tripolyphosphate hydrolysis which occurs prior to release of AdoMet from the enzyme. The sequence is that of S-adenosylmethionine synthase from Ectopseudomonas mendocina (strain ymp) (Pseudomonas mendocina).